We begin with the raw amino-acid sequence, 335 residues long: Methionine import ATP-binding protein MetN 1 (335 aa).

In terms of domain architecture, ABC transporter spans 2 to 242; it reads IEFHNVHKTY…PQHPTTRRFV (241 aa). 38–45 contributes to the ATP binding site; sequence GHSGAGKS.

It belongs to the ABC transporter superfamily. Methionine importer (TC 3.A.1.24) family. The complex is composed of two ATP-binding proteins (MetN), two transmembrane proteins (MetI) and a solute-binding protein (MetQ).

It localises to the cell inner membrane. The catalysed reaction is L-methionine(out) + ATP + H2O = L-methionine(in) + ADP + phosphate + H(+). The enzyme catalyses D-methionine(out) + ATP + H2O = D-methionine(in) + ADP + phosphate + H(+). In terms of biological role, part of the ABC transporter complex MetNIQ involved in methionine import. Responsible for energy coupling to the transport system. The chain is Methionine import ATP-binding protein MetN 1 from Pseudomonas savastanoi pv. phaseolicola (strain 1448A / Race 6) (Pseudomonas syringae pv. phaseolicola (strain 1448A / Race 6)).